The primary structure comprises 481 residues: MIRNSEDFSHHLSRESKAREKGPFQMLGRIKSSTGIDAISFSSGLPHPNKFAIRELSIKFPQLGCFKEENGTYAKEVNVTFNIKADPSEGLLNFSQSLQYGQCQGISELVGFIKEHIRRIHAPRYENWDIKMSNGNTSGLEYCLRLLVNYGDHVLTEKYTYPAAITAMRALGVQFVSVDMDSEGMLPESLEEIMRDWDISLGPRPHVLYTVPTGQNPTGSTLSLSRRKKLLALARKYDIIIVEDEPYYFLQMEDYNGSLNPAQQKCDGSTFLKSLVPSLLSLDTEGRVLRLDSFSKLIAPGTRLGYITGNSMFIDHITRIAEVCTESPSGICQSVLYAMLHNWGQEGFCAWLQELQYSYTVRRNAFLNVANKYLPNSVCIYHVPRAGLFLWVELNLNHYRFSDTKKSVSQIEMEIFLALVEKGVKTVCGQFFMANPERSTKIFFRFAYSIADFEDFEEGIKRFTSVINEHFNVESRVRICP.

It belongs to the class-I pyridoxal-phosphate-dependent aminotransferase family. Pyridoxal 5'-phosphate serves as cofactor.

Its subcellular location is the cytoplasm. The enzyme catalyses an aromatic L-alpha-amino acid + 2-oxoglutarate = an aromatic oxo-acid + L-glutamate. Its function is as follows. Has aromatic amino acid transaminase activity. The protein is Aromatic amino acid aminotransferase C1773.13 of Schizosaccharomyces pombe (strain 972 / ATCC 24843) (Fission yeast).